The following is a 138-amino-acid chain: Large ribosomal subunit protein mL54 (138 aa).

A mitochondrion-targeting transit peptide spans 1-14; it reads MATKRLFGATRTWA.

It belongs to the mitochondrion-specific ribosomal protein mL54 family. As to quaternary structure, component of the mitochondrial large ribosomal subunit (mt-LSU). Mature mammalian 55S mitochondrial ribosomes consist of a small (28S) and a large (39S) subunit. The 28S small subunit contains a 12S ribosomal RNA (12S mt-rRNA) and 30 different proteins. The 39S large subunit contains a 16S rRNA (16S mt-rRNA), a copy of mitochondrial valine transfer RNA (mt-tRNA(Val)), which plays an integral structural role, and 52 different proteins.

It is found in the mitochondrion. In Homo sapiens (Human), this protein is Large ribosomal subunit protein mL54 (MRPL54).